The following is a 298-amino-acid chain: MPEQRLRIAIQKKGRLSEDTVKLLKACGVKVNLNTQRLIAHSDNMAIDILRVRDDDIPGLIMDGVVDLGFIGQNVLEEENMMRTVAKEPTAHKVVKELAFGACRFSIAVDQDFDYQGAKSLANLRIATTYVHILKRFMEEQNIPYTSCMLTGSVEVAPRAGLADAICDLVSTGATLEANGLKEVEVIYRSTAVLIQRADPLNQQKQDLVNRLLTRIDGVQSAKECKYIMLHAPTANLEAIKSLLPGSEQPTVMQLSGSSDHVALHVVSKENLFWETMEQLKTLGASSILVLPIEKMME.

This sequence belongs to the ATP phosphoribosyltransferase family. Long subfamily. The cofactor is Mg(2+).

The protein resides in the cytoplasm. The enzyme catalyses 1-(5-phospho-beta-D-ribosyl)-ATP + diphosphate = 5-phospho-alpha-D-ribose 1-diphosphate + ATP. The protein operates within amino-acid biosynthesis; L-histidine biosynthesis; L-histidine from 5-phospho-alpha-D-ribose 1-diphosphate: step 1/9. Its activity is regulated as follows. Feedback inhibited by histidine. Functionally, catalyzes the condensation of ATP and 5-phosphoribose 1-diphosphate to form N'-(5'-phosphoribosyl)-ATP (PR-ATP). Has a crucial role in the pathway because the rate of histidine biosynthesis seems to be controlled primarily by regulation of HisG enzymatic activity. The polypeptide is ATP phosphoribosyltransferase (Psychromonas ingrahamii (strain DSM 17664 / CCUG 51855 / 37)).